Consider the following 978-residue polypeptide: MHSWKKKLVVSQLALACTLAITSQANATTYDTWTYYDNPTTALDWNNMDAAGTVDGNYVNYSGFVYYNNANGDFDQTFNGDTVNGTISTYYLNHDYNDATSNELNISNSVIHGSITSMLPIGYYDRFDTLDHDGYSEYYRFNNGTDTVDGNWYDGDVFTLNIANSTIDDDYEAFYFTDSYKDGDVTKYTNETFDVSEGVAVNLDVESNINISNNSRVAGIALSQGNTYNNTYTTESHNWDNNINVFDSTVTSGSDYILDSAYTTDTGTFGTGHFGNSDEPSDYTGAGDVALSFTDDNGASDYAMKNNVYFSNSTLMGDVKFTSNWNANFDADGDDTNGDGVPDTNHGWADDGLNVDELNLTLDNGSKWVGQATYTVDTTSRMYDVETNSLTPGATLEDNAWNRIVGNEVFQSGVFNVTLNNGSEWDTVGDSTVDTLAVNNGSQVNVSNSDLTSDTIDLTNGSSLNIGEGGYVDTDHLTIDSYSTVGLTESTGWSTYSNLYANTITVTNGGVLDVNVGQFDTEVFSTDKLELTSGNTADHNGNVVSGVFNIHSSDYVLNADLVNDRTWDTTQANYGYGTIAMNSDGHLTINGNGDINNGDELDNSSVDNVVAATGNYKVRIDNATGAGSVADYKGNELIYVNDVNTDATFSAANKADLGAYTYQAKQEGNTVVLEQMELTDYANMALSIPSANTNIWNLEQDTVGTRLTNARHGLADNGGAWVSYFGGNFNGDNGTINYDQDVNGIMVGVDTKVDGNNAKWIVGAAAGFAKGDLSDRTGQVDQDSQSAYIYSSARFANNIFVDGNLSYSHFNNDLSANMSDGTYVDGNTSSDAWGFGLKLGYDLKLGDAGYVTPYGSVSGLFQSGDDYQLSNDMKVDGQSYDSMRYELGVDAGYTFTYSEDQALTPYFKLAYVYDDSNNDADVNGDSIDNGVEGSAVRVGLGTQFSFTKNFSAYTDANYLGGGDVDQDWSANVGVKYTW.

The N-terminal stretch at 1-27 (MHSWKKKLVVSQLALACTLAITSQANA) is a signal peptide. The Autotransporter domain occupies 713–978 (GLADNGGAWV…SANVGVKYTW (266 aa)).

This is an uncharacterized protein from Salmonella typhimurium (strain LT2 / SGSC1412 / ATCC 700720).